The primary structure comprises 516 residues: Myocyte-specific enhancer factor 2A homolog (516 aa).

The segment at 1–100 (MGRKKIQITR…KGLNGCESPD (100 aa)) is interaction with hdac9. Residues 3–57 (RKKIQITRIMDERNRQVTFTKRKFGLMKKAYELSVLCDCEIALIIFNSSNKLFQY) form the MADS-box domain. Residues 58–86 (ASTDMDKVLLKYTEYNEPHESRTNSDIVE) constitute a DNA-binding region (mef2-type). Residues 318–339 (PSSKGMMPPLNTQRVTSSQGTQ) are disordered. A compositionally biased stretch (polar residues) spans 327 to 339 (LNTQRVTSSQGTQ). The residue at position 343 (T343) is a Phosphothreonine; by NLK. S386 is modified (phosphoserine; by NLK). Over residues 420–433 (GSNLSINTNQNINI) the composition is skewed to polar residues. The segment at 420–516 (GSNLSINTNQ…KRMRMDAWVT (97 aa)) is disordered. Over residues 465–475 (DSLSSSSSSYD) the composition is skewed to low complexity. Basic and acidic residues-rich tracts occupy residues 476–486 (GSDREDVRNDF) and 497–516 (NNED…AWVT).

The protein belongs to the MEF2 family. As to quaternary structure, interacts with hdac9 and nlk2. As to expression, restricted to the somitic mesoderm of early embryos. Expressed in the head region of neurula stage embryos and in body muscle (myotomes) of the tadpole. Expressed in all tissues examined in the adult.

Its subcellular location is the nucleus. May regulate muscle-specific transcription in the embryo and may regulate transcription of a variety of cell types in the adult. Binds to the sequence 5'-CTA[TA]4TAR-3'. Acts downstream of nlk2 in anterior neural development, including eye formation. The protein is Myocyte-specific enhancer factor 2A homolog (mef2a) of Xenopus laevis (African clawed frog).